The primary structure comprises 246 residues: Type III pantothenate kinase (246 aa).

An ATP-binding site is contributed by 6-13 (DVGNTHSV). Position 103-106 (103-106 (GADR)) interacts with substrate. The active-site Proton acceptor is Asp-105. Asp-125 contributes to the K(+) binding site. Thr-128 is an ATP binding site. Thr-179 lines the substrate pocket.

Belongs to the type III pantothenate kinase family. Homodimer. Requires NH4(+) as cofactor. K(+) serves as cofactor.

The protein resides in the cytoplasm. The enzyme catalyses (R)-pantothenate + ATP = (R)-4'-phosphopantothenate + ADP + H(+). The protein operates within cofactor biosynthesis; coenzyme A biosynthesis; CoA from (R)-pantothenate: step 1/5. In terms of biological role, catalyzes the phosphorylation of pantothenate (Pan), the first step in CoA biosynthesis. The protein is Type III pantothenate kinase (coaX) of Thermotoga maritima (strain ATCC 43589 / DSM 3109 / JCM 10099 / NBRC 100826 / MSB8).